The sequence spans 76 residues: DNA-directed RNA polymerase subunit omega (76 aa).

Belongs to the RNA polymerase subunit omega family. In terms of assembly, in cyanobacteria the RNAP catalytic core is composed of 2 alpha, 1 beta, 1 beta', 1 gamma and 1 omega subunit. When a sigma factor is associated with the core the holoenzyme is formed, which can initiate transcription.

The catalysed reaction is RNA(n) + a ribonucleoside 5'-triphosphate = RNA(n+1) + diphosphate. Its function is as follows. Promotes RNA polymerase assembly. Latches the N- and C-terminal regions of the beta' subunit thereby facilitating its interaction with the beta and alpha subunits. This chain is DNA-directed RNA polymerase subunit omega, found in Acaryochloris marina (strain MBIC 11017).